A 1438-amino-acid chain; its full sequence is DNA polymerase III PolC-type (1438 aa).

Residues 422-578 (YVVFDVETTG…YDTEATAYIF (157 aa)) enclose the Exonuclease domain.

Belongs to the DNA polymerase type-C family. PolC subfamily.

It localises to the cytoplasm. The catalysed reaction is DNA(n) + a 2'-deoxyribonucleoside 5'-triphosphate = DNA(n+1) + diphosphate. In terms of biological role, required for replicative DNA synthesis. This DNA polymerase also exhibits 3' to 5' exonuclease activity. The chain is DNA polymerase III PolC-type from Staphylococcus aureus (strain bovine RF122 / ET3-1).